A 127-amino-acid chain; its full sequence is Glycine cleavage system H protein (127 aa).

One can recognise a Lipoyl-binding domain in the interval 23–105 (KVSVGITDFA…YGEGWIAVIE (83 aa)). Position 64 is an N6-lipoyllysine (K64).

The protein belongs to the GcvH family. As to quaternary structure, the glycine cleavage system is composed of four proteins: P, T, L and H. The cofactor is (R)-lipoate.

The glycine cleavage system catalyzes the degradation of glycine. The H protein shuttles the methylamine group of glycine from the P protein to the T protein. This is Glycine cleavage system H protein from Coprothermobacter proteolyticus (strain ATCC 35245 / DSM 5265 / OCM 4 / BT).